Reading from the N-terminus, the 148-residue chain is Nucleoside diphosphate kinase (148 aa).

ATP contacts are provided by K9, F57, R85, T91, R102, and N112. T91 carries the post-translational modification Phosphothreonine. H115 serves as the catalytic Pros-phosphohistidine intermediate. Residue S122 is modified to Phosphoserine.

It belongs to the NDK family. As to quaternary structure, homotetramer. Mg(2+) serves as cofactor.

It is found in the cytoplasm. The catalysed reaction is a 2'-deoxyribonucleoside 5'-diphosphate + ATP = a 2'-deoxyribonucleoside 5'-triphosphate + ADP. The enzyme catalyses a ribonucleoside 5'-diphosphate + ATP = a ribonucleoside 5'-triphosphate + ADP. Its function is as follows. Major role in the synthesis of nucleoside triphosphates other than ATP. The ATP gamma phosphate is transferred to the NDP beta phosphate via a ping-pong mechanism, using a phosphorylated active-site intermediate. The protein is Nucleoside diphosphate kinase of Bacillus licheniformis (strain ATCC 14580 / DSM 13 / JCM 2505 / CCUG 7422 / NBRC 12200 / NCIMB 9375 / NCTC 10341 / NRRL NRS-1264 / Gibson 46).